The following is a 247-amino-acid chain: MESSSTIDPAEVAKFEAMAAEWWNPHGKFKPLHQMNPCRLDYITQQIAAEFDRDLSAPLPFEGLRLLDIGCGGGLLSEPMARLGAEVIGADAAPRNIPVAKLHAEQSGLTIDYRNTTAEALAAAGERFDVVLNMEVVEHVADPLAYLTACRELLKPGGLMICSTLNRNPKSFAMAIVGAEWVMRWLPKGTHDWSKFITPDELYDLIRKAGLDPVDRKGMVFNPVSWSWSLSTRDLSVNYVTASVRRT.

Residues arginine 39, glycine 70, aspartate 91, and methionine 134 each coordinate S-adenosyl-L-methionine.

The protein belongs to the methyltransferase superfamily. UbiG/COQ3 family.

It catalyses the reaction a 3-demethylubiquinol + S-adenosyl-L-methionine = a ubiquinol + S-adenosyl-L-homocysteine + H(+). It carries out the reaction a 3-(all-trans-polyprenyl)benzene-1,2-diol + S-adenosyl-L-methionine = a 2-methoxy-6-(all-trans-polyprenyl)phenol + S-adenosyl-L-homocysteine + H(+). The protein operates within cofactor biosynthesis; ubiquinone biosynthesis. O-methyltransferase that catalyzes the 2 O-methylation steps in the ubiquinone biosynthetic pathway. This is Ubiquinone biosynthesis O-methyltransferase from Cereibacter sphaeroides (strain ATCC 17029 / ATH 2.4.9) (Rhodobacter sphaeroides).